A 75-amino-acid polypeptide reads, in one-letter code: Conotoxin Vc6.15 (75 aa).

Residues 1–19 (MEKLTILLHVAAVLMSTQA) form the signal peptide. The propeptide occupies 20 to 41 (LIQEQRQKAKINLFSKRKPSAE). Cystine bridges form between C49–C62, C55–C66, and C61–C71.

This sequence belongs to the conotoxin O2 superfamily. As to expression, expressed by the venom duct.

It is found in the secreted. Inhibits voltage-gated ion channels. The protein is Conotoxin Vc6.15 of Conus victoriae (Queen Victoria cone).